The following is a 391-amino-acid chain: Putative 8-amino-7-oxononanoate synthase (391 aa).

Substrate is bound by residues Arg-22 and His-135. Pyridoxal 5'-phosphate is bound by residues Ser-183, 208–211 (DDAH), and 239–242 (TLSK). Lys-242 carries the post-translational modification N6-(pyridoxal phosphate)lysine. Substrate is bound at residue Thr-358.

Belongs to the class-II pyridoxal-phosphate-dependent aminotransferase family. BioF subfamily. Homodimer. Pyridoxal 5'-phosphate serves as cofactor.

The catalysed reaction is 6-carboxyhexanoyl-[ACP] + L-alanine + H(+) = (8S)-8-amino-7-oxononanoate + holo-[ACP] + CO2. The protein operates within cofactor biosynthesis; biotin biosynthesis. In terms of biological role, catalyzes the decarboxylative condensation of pimeloyl-[acyl-carrier protein] and L-alanine to produce 8-amino-7-oxononanoate (AON), [acyl-carrier protein], and carbon dioxide. This Thermosynechococcus vestitus (strain NIES-2133 / IAM M-273 / BP-1) protein is Putative 8-amino-7-oxononanoate synthase (bioF).